A 404-amino-acid polypeptide reads, in one-letter code: MKLPIYLDYAATCPVDERVVKKMMEFLSIDGNFGNPASRSHKFGWQAEEAVDVARNHIADLIGADSREIVFTSGATEADNLALKGVMRFYQTKGKHLITCKTEHKAILDTCRQLEREGFEVTYLDPKSDGLIDLEELKSVIRDDTVLVSIMHANNEIGVVQDIAKIGEICRERKVLFHTDATQSVGKLPINLSELKVDLLSMSSHKLYGPKGIGALYVCRKPRVRLEAIIHGGGHERGMRSGTLPVHQIVGMGEAYRIAKEEMATEMPRLTALRDRLYNGLKDIEETYVNGSMEQRLGNNLNISFNYVEGESLMMALRDIAVSSGSACTSASLEPSYVLRALGLNDELAHSSIRFTVGRYTTAEEIDYAIGLVKSAVEKLRDLSPLWDMFKEGIDLNSIEWTHH.

Pyridoxal 5'-phosphate is bound by residues 75 to 76 (AT), Asn-155, Gln-183, and 203 to 205 (SSH). An N6-(pyridoxal phosphate)lysine modification is found at Lys-206. Thr-243 contributes to the pyridoxal 5'-phosphate binding site. Cys-328 acts as the Cysteine persulfide intermediate in catalysis. [2Fe-2S] cluster is bound at residue Cys-328.

The protein belongs to the class-V pyridoxal-phosphate-dependent aminotransferase family. NifS/IscS subfamily. In terms of assembly, homodimer. Forms a heterotetramer with IscU, interacts with other sulfur acceptors. Requires pyridoxal 5'-phosphate as cofactor.

Its subcellular location is the cytoplasm. It carries out the reaction (sulfur carrier)-H + L-cysteine = (sulfur carrier)-SH + L-alanine. Its pathway is cofactor biosynthesis; iron-sulfur cluster biosynthesis. In terms of biological role, master enzyme that delivers sulfur to a number of partners involved in Fe-S cluster assembly, tRNA modification or cofactor biosynthesis. Catalyzes the removal of elemental sulfur atoms from cysteine to produce alanine. Functions as a sulfur delivery protein for Fe-S cluster synthesis onto IscU, an Fe-S scaffold assembly protein, as well as other S acceptor proteins. This Histophilus somni (strain 129Pt) (Haemophilus somnus) protein is Cysteine desulfurase IscS.